Here is a 194-residue protein sequence, read N- to C-terminus: Mediator of RNA polymerase II transcription subunit 8 (194 aa).

It belongs to the Mediator complex subunit 8 family. As to quaternary structure, component of the Mediator complex.

The protein localises to the nucleus. In terms of biological role, component of the Mediator complex, a coactivator involved in the regulated transcription of nearly all RNA polymerase II-dependent genes. Mediator functions as a bridge to convey information from gene-specific regulatory proteins to the basal RNA polymerase II transcription machinery. Mediator is recruited to promoters by direct interactions with regulatory proteins and serves as a scaffold for the assembly of a functional preinitiation complex with RNA polymerase II and the general transcription factors. This is Mediator of RNA polymerase II transcription subunit 8 (MED8) from Yarrowia lipolytica (strain CLIB 122 / E 150) (Yeast).